We begin with the raw amino-acid sequence, 717 residues long: Adhesion cell surface protein MAD1 (717 aa).

The signal sequence occupies residues 1–19; the sequence is MKSALSVVVAAAGVQQASA. Low complexity-rich tracts occupy residues 237–254 and 262–274; these read TPVT…QTTT and SKET…QTTP. Disordered stretches follow at residues 237–392 and 451–506; these read TPVT…ATTT and RTQS…TPPC. A run of 8 repeats spans residues 275 to 286, 287 to 298, 299 to 310, 311 to 328, 329 to 340, 341 to 352, 353 to 364, and 365 to 376. The span at 275–366 shows a compositional bias: polar residues; that stretch reads GKETTPAQQT…TPAQQTTPGK (92 aa). Low complexity-rich tracts occupy residues 368–392 and 484–503; these read TTPA…ATTT and QPTG…STQT. A CFEM domain is found at 481-595; it reads TPEQPTGEKP…TQIITVTGTP (115 aa). Intrachain disulfides connect Cys513/Cys546, Cys524/Cys532, and Cys534/Cys568. Asp529 provides a ligand contact to heme. A glycan (N-linked (GlcNAc...) asparagine) is linked at Asn614. Positions 632-690 are disordered; sequence PTPTGGVPNQPPATASVPAGQNPPPVTGQNPPPAVTDQSPPPAITTGTGGVIPPKPTGS. Pro residues predominate over residues 652–674; that stretch reads QNPPPVTGQNPPPAVTDQSPPPA. Ala695 carries GPI-anchor amidated alanine lipidation. A propeptide spans 696–717 (removed in mature form); that stretch reads GSGRVGAGLGMVLAVAAFVAAL.

Belongs to the RBT5 family. The GPI-anchor is attached to the protein in the endoplasmic reticulum and serves to target the protein to the cell surface. There, the glucosamine-inositol phospholipid moiety is cleaved off and the GPI-modified mannoprotein is covalently attached via its lipidless GPI glycan remnant to the 1,6-beta-glucan of the outer cell wall layer.

It is found in the secreted. It localises to the cell wall. The protein localises to the cell membrane. Cell surface adhesion protein that plays a key role in virulence by allowing adherence to the insect host surface. Required to orientate the cytoskeleton and stimulate the expression of genes involved in the cell cycle. Is also involved in achieving the septin hourglass shape and subsequent separation of cells. The protein is Adhesion cell surface protein MAD1 of Metarhizium anisopliae (Entomophthora anisopliae).